We begin with the raw amino-acid sequence, 526 residues long: MLQEESDLSLIIAQIVQKLKGSNLYSQLERQAWASLQRPEIKLESLKEDIKEFFKISGWEKKLQNAVYSELSVFPLPSHPAAPPEHLKEPLVYMRKAQGSWEKRILKSLNSMCTELSIPLARKRPVGEQKELLNKWNEMGTDEPDLSLFRPVYAPKDFLEVLINLRNPNYENGDSLSFRTHLGLIQVPLKVKDIPELKECFVELGLNIGQLGIDDSTQVPPELFENEHVRIGQKVLAEQDSAAAQQYIRQGSPTALRAELWALILNISSQPEDVLYYEQLKTNVIQHDLLVDSLIYKDVKLTASNDDYYFVFEDYLYQVLLCFSRDTSVLSHFAFNSASPPKSYIRGKLGLEEYAVFYPPNGVIPFHGFSMYVAPLCFLYHEPSKLYQIFREMYVRFFFRLHSISSHPSGIVSLCLLFETLLQTYLPQLFYHLREIGAQPLRISFKWMVRAFSGYLATDQLLLLWDRILGYNSLEILAVLAAAVFAFRAVNLMEVTSLAAAEAVLADLSTLKVMPLLQIFLFATVT.

Residues 251–472 (GSPTALRAEL…LLWDRILGYN (222 aa)) enclose the Rab-GAP TBC domain.

Its function is as follows. May act as a GTPase-activating protein for Rab family protein(s). This is TBC1 domain family member 19 (TBC1D19) from Homo sapiens (Human).